The sequence spans 377 residues: Putative F-box protein At1g70380 (377 aa).

The F-box domain maps to 3-48 (NTSFETLALDMQIEILARLPLKYLMRCMCVSKKWASLIRGEDFRSA).

This Arabidopsis thaliana (Mouse-ear cress) protein is Putative F-box protein At1g70380.